An 855-amino-acid polypeptide reads, in one-letter code: Endochitinase 2 (855 aa).

The signal sequence occupies residues 1–22 (MGPTNILAAFIAVSSLFIQSLA). One can recognise a GH18 domain in the interval 29-340 (SNLAVYWGQG…DIMKEVLLRC (312 aa)). N90 carries N-linked (GlcNAc...) asparagine glycosylation. E175 functions as the Proton donor in the catalytic mechanism. The segment at 341–672 (DPDPPTSTVT…APSSSTTEDR (332 aa)) is disordered. Residues 346–400 (TSTVTSTTSASTSTQTSSQSTTMETKTLSASTTPSSPSTVSPSSTMQTTSTGSTS) show a composition bias toward low complexity. Residues 401–456 (IETVTTRSQEPPSTTISTRSASTEPVTTRSQEPPSTTISTRSASTETVTTRSQEPP) show a composition bias toward polar residues. Residues 457–483 (STTISTWSASTETSTSSQDSPSTTIST) are compositionally biased toward low complexity. A compositionally biased stretch (polar residues) spans 484–521 (KSAPTGTVTTRSQDLPSTTISTRSPETETETATTKSQG). The segment covering 522 to 533 (SPSITLSTRSSS) has biased composition (low complexity). The segment covering 534–555 (AETVSTRSQHSSSTTISTKSAP) has biased composition (polar residues). A compositionally biased stretch (low complexity) spans 556–567 (TETGTTSEHSTS). A compositionally biased stretch (polar residues) spans 568–641 (MPVSTRSAST…SQTPTTIITG (74 aa)). 2 stretches are compositionally biased toward low complexity: residues 642–652 (TPSDPVSAPTT) and 659–672 (TLTLAPSSSTTEDR). The GPI-anchor amidated glycine moiety is linked to residue G826. Residues 827–855 (SAMTVRSMDVVAKALITAGAAVLGLFLGL) constitute a propeptide, removed in mature form.

It belongs to the glycosyl hydrolase 18 family. Chitinase class III subfamily.

It is found in the cell membrane. It carries out the reaction Random endo-hydrolysis of N-acetyl-beta-D-glucosaminide (1-&gt;4)-beta-linkages in chitin and chitodextrins.. Functionally, may be associated with endosporulation. The chain is Endochitinase 2 (CTS2) from Coccidioides posadasii (strain C735) (Valley fever fungus).